We begin with the raw amino-acid sequence, 443 residues long: Ribulose bisphosphate carboxylase large chain (443 aa).

Residue lysine 7 is modified to N6,N6,N6-trimethyllysine. Residues asparagine 116 and threonine 166 each coordinate substrate. Lysine 168 serves as the catalytic Proton acceptor. Lysine 170 lines the substrate pocket. Positions 194, 196, and 197 each coordinate Mg(2+). Lysine 194 carries the post-translational modification N6-carboxylysine. The Proton acceptor role is filled by histidine 287. Substrate contacts are provided by arginine 288, histidine 320, and serine 372.

It belongs to the RuBisCO large chain family. Type I subfamily. In terms of assembly, heterohexadecamer of 8 large chains and 8 small chains; disulfide-linked. The disulfide link is formed within the large subunit homodimers. It depends on Mg(2+) as a cofactor. In terms of processing, the disulfide bond which can form in the large chain dimeric partners within the hexadecamer appears to be associated with oxidative stress and protein turnover.

The protein localises to the plastid. Its subcellular location is the chloroplast. It carries out the reaction 2 (2R)-3-phosphoglycerate + 2 H(+) = D-ribulose 1,5-bisphosphate + CO2 + H2O. The enzyme catalyses D-ribulose 1,5-bisphosphate + O2 = 2-phosphoglycolate + (2R)-3-phosphoglycerate + 2 H(+). RuBisCO catalyzes two reactions: the carboxylation of D-ribulose 1,5-bisphosphate, the primary event in carbon dioxide fixation, as well as the oxidative fragmentation of the pentose substrate in the photorespiration process. Both reactions occur simultaneously and in competition at the same active site. This chain is Ribulose bisphosphate carboxylase large chain, found in Abies sachalinensis (Sakhalin fir).